The primary structure comprises 481 residues: Cytochrome P450 monooxygenase dpfgJ (481 aa).

Residues 23-43 (LVFTQAAVIGSILFVFLLGLY) form a helical membrane-spanning segment. An N-linked (GlcNAc...) asparagine glycan is attached at Asn-338. Heme is bound at residue Cys-427.

Belongs to the cytochrome P450 family. The cofactor is heme.

The protein localises to the membrane. It participates in secondary metabolite biosynthesis; terpenoid biosynthesis. Its function is as follows. Cytochrome P450 monooxygenase; part of the gene cluster that mediates the biosynthesis of diterpenoid pyrones. The first step of the pathway is the synthesis of the alpha-pyrone moiety by the polyketide synthase dpfgA via condensation of one acetyl-CoA starter unit with 3 malonyl-CoA units and 2 methylations. The alpha-pyrone is then combined with geranylgeranyl pyrophosphate (GGPP) formed by the GGPP synthase dpfgD through the action of the prenyltransferase dpfgC to yield a linear alpha-pyrone diterpenoid. Subsequent steps in the diterpenoid pyrone biosynthetic pathway involve the decalin core formation, which is initiated by the epoxidation of the C10-C11 olefin by the FAD-dependent oxidoreductase dpfgE, and is followed by a cyclization cascade catalyzed by the terpene cyclase dpfgB. The short chain dehydrogenase/reductase dpfgG then oxidizes the 8S hydroxy group to a ketone and the short chain dehydrogenase/reductase dpfgH reduces the ketone to the 8R hydroxy group to yield higginsianin B. Higginsianin B is further methylated by the methyltransferase dpfgI to produce the intermediate named FDDP B. The cytochrome P450 monooxygenase dfgpJ then catalyzes a three-step oxidation at C-27 to generate a carboxylic acid as well as C-26 hydroxylation. Finally, methyltransferase dpfgK methylates the carboxylic acid generated by dpfgJ, yielding the final diterpenoid pyrones from the pathway which were named FDDP D and FDDP E. This is Cytochrome P450 monooxygenase dpfgJ from Gibberella zeae (strain ATCC MYA-4620 / CBS 123657 / FGSC 9075 / NRRL 31084 / PH-1) (Wheat head blight fungus).